We begin with the raw amino-acid sequence, 96 residues long: UPF0235 protein VV2877 (96 aa).

Belongs to the UPF0235 family.

The protein is UPF0235 protein VV2877 of Vibrio vulnificus (strain YJ016).